We begin with the raw amino-acid sequence, 425 residues long: Histidine--tRNA ligase (425 aa).

This sequence belongs to the class-II aminoacyl-tRNA synthetase family. In terms of assembly, homodimer.

The protein localises to the cytoplasm. It carries out the reaction tRNA(His) + L-histidine + ATP = L-histidyl-tRNA(His) + AMP + diphosphate + H(+). The chain is Histidine--tRNA ligase from Aeromonas hydrophila subsp. hydrophila (strain ATCC 7966 / DSM 30187 / BCRC 13018 / CCUG 14551 / JCM 1027 / KCTC 2358 / NCIMB 9240 / NCTC 8049).